Consider the following 303-residue polypeptide: Quinolinate synthase (303 aa).

Residues His24 and Ser41 each contribute to the iminosuccinate site. [4Fe-4S] cluster is bound at residue Cys86. Iminosuccinate contacts are provided by residues 112–114 (YVN) and Ser129. Residue Cys172 coordinates [4Fe-4S] cluster. Iminosuccinate-binding positions include 198 to 200 (HPE) and Thr215. Position 260 (Cys260) interacts with [4Fe-4S] cluster.

This sequence belongs to the quinolinate synthase family. Type 2 subfamily. The cofactor is [4Fe-4S] cluster.

The protein resides in the cytoplasm. It carries out the reaction iminosuccinate + dihydroxyacetone phosphate = quinolinate + phosphate + 2 H2O + H(+). Its pathway is cofactor biosynthesis; NAD(+) biosynthesis; quinolinate from iminoaspartate: step 1/1. Its function is as follows. Catalyzes the condensation of iminoaspartate with dihydroxyacetone phosphate to form quinolinate. The protein is Quinolinate synthase of Clostridium kluyveri (strain NBRC 12016).